A 34-amino-acid chain; its full sequence is U10-ctenitoxin-Pr1a (34 aa).

4 disulfide bridges follow: Cys2–Cys15, Cys9–Cys20, Cys14–Cys31, and Cys22–Cys29.

As to expression, expressed by the venom gland.

It localises to the secreted. Non-toxic to mice and insects. The protein is U10-ctenitoxin-Pr1a of Phoneutria reidyi (Brazilian Amazonian armed spider).